The primary structure comprises 130 residues: Small ribosomal subunit protein uS9 (130 aa).

It belongs to the universal ribosomal protein uS9 family.

This chain is Small ribosomal subunit protein uS9, found in Vibrio atlanticus (strain LGP32) (Vibrio splendidus (strain Mel32)).